We begin with the raw amino-acid sequence, 507 residues long: uncharacterized protein (507 aa).

A compositionally biased stretch (low complexity) spans 1–12; it reads MEKSISSISKAS. A disordered region spans residues 1–20; it reads MEKSISSISKASMNSDEKLD. The next 12 membrane-spanning stretches (helical) occupy residues 57–74, 100–120, 126–146, 157–177, 189–209, 221–241, 283–303, 326–346, 353–373, 379–399, 416–436, and 445–465; these read FDFRILPLLALLYLFNAL, IMISIFYIPFVLCAFPFSYLY, ARILPFFMLSFGAMSLCQAAV, WFLGMAESAVLPGVVYYLTTF, IFYAAANVSSAFGGLLAYGVF, YLFLIEGGVTFLCAIVIFLVL, VFKHPIAILWLLEEMALGVPL, LMTVAPAISGAIWLLVFAFIS, GIVLIAAISTTMIGFIVYGSI, IGVSYFACFLMTAGAAASSVL, VFTSVGVPLANVMGLVSANIF, and VPALGITAGFGGLGILLVASI.

This sequence belongs to the major facilitator superfamily. Allantoate permease family.

Its subcellular location is the endoplasmic reticulum. It is found in the membrane. This is an uncharacterized protein from Schizosaccharomyces pombe (strain 972 / ATCC 24843) (Fission yeast).